We begin with the raw amino-acid sequence, 192 residues long: Large ribosomal subunit protein bL9 (192 aa).

The disordered stretch occupies residues 173–192 (ALRPEDFFDPEADGLDENEA). Residues 179 to 192 (FFDPEADGLDENEA) are compositionally biased toward acidic residues.

It belongs to the bacterial ribosomal protein bL9 family.

Functionally, binds to the 23S rRNA. In Rhizobium etli (strain ATCC 51251 / DSM 11541 / JCM 21823 / NBRC 15573 / CFN 42), this protein is Large ribosomal subunit protein bL9.